The following is a 107-amino-acid chain: Vasopressin-neurophysin 2 (107 aa).

Residues C1 and C6 are joined by a disulfide bond. G9 carries the post-translational modification Glycine amide. Cystine bridges form between C22–C66, C25–C39, C33–C56, C40–C46, C73–C85, C79–C97, and C86–C91.

Belongs to the vasopressin/oxytocin family. As to quaternary structure, interacts with vasopressin receptors V1bR/AVPR1B (Ki=85 pM), V1aR/AVPR1A (Ki=0.6 nM) and V2R/AVPR2 (Ki=4.9 nM). Interacts with oxytocin receptor (OXTR) (Ki=110 nM).

It is found in the secreted. Functionally, neurophysin 2 specifically binds vasopressin. Vasopressin has a direct antidiuretic action on the kidney, it also causes vasoconstriction of the peripheral vessels. Acts by binding to vasopressin receptors (V1bR/AVPR1B, V1aR/AVPR1A, and V2R/AVPR2). The polypeptide is Vasopressin-neurophysin 2 (AVP) (Balaenoptera physalus (Fin whale)).